Consider the following 345-residue polypeptide: GTP cyclohydrolase-2 (345 aa).

A disordered region spans residues Met-1–Gly-27. Arg-143 to Glu-147 contacts GTP. Residues Cys-148, Cys-159, and Cys-161 each coordinate Zn(2+). Residues Gln-164, Glu-197–Arg-199, and Thr-219 contribute to the GTP site. Residue Asp-231 is the Proton acceptor of the active site. Residue Arg-233 is the Nucleophile of the active site. The GTP site is built by Thr-254 and Lys-259. The disordered stretch occupies residues Pro-312–Ile-345. Positions Thr-317–Ile-345 are enriched in polar residues.

Belongs to the GTP cyclohydrolase II family. Requires Zn(2+) as cofactor.

The catalysed reaction is GTP + 4 H2O = 2,5-diamino-6-hydroxy-4-(5-phosphoribosylamino)-pyrimidine + formate + 2 phosphate + 3 H(+). Its pathway is cofactor biosynthesis; riboflavin biosynthesis; 5-amino-6-(D-ribitylamino)uracil from GTP: step 1/4. Catalyzes the conversion of GTP to 2,5-diamino-6-ribosylamino-4(3H)-pyrimidinone 5'-phosphate (DARP), formate and pyrophosphate. The protein is GTP cyclohydrolase-2 (RIB1) of Saccharomyces cerevisiae (strain ATCC 204508 / S288c) (Baker's yeast).